The sequence spans 156 residues: Small ribosomal subunit protein uS7 (156 aa).

It belongs to the universal ribosomal protein uS7 family. In terms of assembly, part of the 30S ribosomal subunit. Contacts proteins S9 and S11.

Its function is as follows. One of the primary rRNA binding proteins, it binds directly to 16S rRNA where it nucleates assembly of the head domain of the 30S subunit. Is located at the subunit interface close to the decoding center, probably blocks exit of the E-site tRNA. The polypeptide is Small ribosomal subunit protein uS7 (Actinobacillus succinogenes (strain ATCC 55618 / DSM 22257 / CCUG 43843 / 130Z)).